The following is a 372-amino-acid chain: Glutamate 5-kinase (372 aa).

Lys14 is a binding site for ATP. Residues Ser54, Asp141, and Asn153 each contribute to the substrate site. 173–174 (TD) provides a ligand contact to ATP. A PUA domain is found at 280–358 (RGHVVIDDGA…GEIESVLGYM (79 aa)).

It belongs to the glutamate 5-kinase family.

The protein resides in the cytoplasm. The catalysed reaction is L-glutamate + ATP = L-glutamyl 5-phosphate + ADP. It participates in amino-acid biosynthesis; L-proline biosynthesis; L-glutamate 5-semialdehyde from L-glutamate: step 1/2. In terms of biological role, catalyzes the transfer of a phosphate group to glutamate to form L-glutamate 5-phosphate. This chain is Glutamate 5-kinase, found in Paraburkholderia phymatum (strain DSM 17167 / CIP 108236 / LMG 21445 / STM815) (Burkholderia phymatum).